The following is a 408-amino-acid chain: Bifunctional enzyme IspD/IspF (408 aa).

A 2-C-methyl-D-erythritol 4-phosphate cytidylyltransferase region spans residues 1-247; that stretch reads MNAPFEKDRR…GPAMTELPDI (247 aa). A 2-C-methyl-D-erythritol 2,4-cyclodiphosphate synthase region spans residues 248–408; that stretch reads RVGNGYDVHG…TVAYPGSLGN (161 aa). A divalent metal cation-binding residues include D254 and H256. Residues 254 to 256 and 280 to 281 contribute to the 4-CDP-2-C-methyl-D-erythritol 2-phosphate site; these read DVH and HS. H288 provides a ligand contact to a divalent metal cation. 4-CDP-2-C-methyl-D-erythritol 2-phosphate is bound by residues 302–304, 378–381, F385, and R388; these read DIG and TTNE.

It in the N-terminal section; belongs to the IspD/TarI cytidylyltransferase family. IspD subfamily. This sequence in the C-terminal section; belongs to the IspF family. A divalent metal cation serves as cofactor.

It carries out the reaction 2-C-methyl-D-erythritol 4-phosphate + CTP + H(+) = 4-CDP-2-C-methyl-D-erythritol + diphosphate. It catalyses the reaction 4-CDP-2-C-methyl-D-erythritol 2-phosphate = 2-C-methyl-D-erythritol 2,4-cyclic diphosphate + CMP. It participates in isoprenoid biosynthesis; isopentenyl diphosphate biosynthesis via DXP pathway; isopentenyl diphosphate from 1-deoxy-D-xylulose 5-phosphate: step 2/6. Its pathway is isoprenoid biosynthesis; isopentenyl diphosphate biosynthesis via DXP pathway; isopentenyl diphosphate from 1-deoxy-D-xylulose 5-phosphate: step 4/6. Bifunctional enzyme that catalyzes the formation of 4-diphosphocytidyl-2-C-methyl-D-erythritol from CTP and 2-C-methyl-D-erythritol 4-phosphate (MEP) (IspD), and catalyzes the conversion of 4-diphosphocytidyl-2-C-methyl-D-erythritol 2-phosphate (CDP-ME2P) to 2-C-methyl-D-erythritol 2,4-cyclodiphosphate (ME-CPP) with a corresponding release of cytidine 5-monophosphate (CMP) (IspF). This is Bifunctional enzyme IspD/IspF from Chelativorans sp. (strain BNC1).